The chain runs to 807 residues: MDDEDVEIDLLTKSSNVDVFCEASTSGNVAQCATVSELRNGMDFESKEAAYYFYREYARSVGFGITIKASRRSKRSGKFIDVKIACSRFGTKREKATAINPRSCPKTGCKAGLHMKRKEDEKWVIYNFVKEHNHEICPDDFYVSVRGKNKPAGALAIKKGLQLALEEEDLKLLLEHFMEMQDKQPGFFYAVDFDSDKRVRNVFWLDAKAKHDYCSFSDVVLFDTFYVRNGYRIPFAPFIGVSHHRQYVLLGCALIGEVSESTYSWLFRTWLKAVGGQAPGVMITDQDKLLSDIVVEVFPDVRHIFCLWSVLSKISEMLNPFVSQDDGFMESFGNCVASSWTDEHFERRWSNMIGKFELNENEWVQLLFRDRKKWVPHYFHGICLAGLSGPERSGSIASHFDKYMNSEATFKDFFELYMKFLQYRCDVEAKDDLEYQSKQPTLRSSLAFEKQLSLIYTDAAFKKFQAEVPGVVSCQLQKEREDGTTAIFRIEDFEERQNFFVALNNELLDACCSCHLFEYQGFLCKHAILVLQSADVSRVPSQYILKRWSKKGNNKEDKNDKCATIDNRMARFDDLCRRFVKLGVVASLSDEACKTALKLLEETVKHCVSMDNSSKFPSEPDKLMTGGSIGLENEGVLDCASKVSKKKKIQKKRKVYCGPEDATNRSEELRQETEQVSSRAPTFENCYIPQANMEEPELGSRATTLGVYYSTQQTNQGFPSISSIQNGYYGHPPTIQAMGNLHSIHERMSQYETQPSMQGAFQGQTGFRGSAIRGCYDIEETLHDMTMGSSQFQGSDSSHPSDHRLSN.

The 87-residue stretch at 52–138 (YFYREYARSV…VKEHNHEICP (87 aa)) folds into the FAR1 domain. The MULE domain maps to 219–315 (VVLFDTFYVR…CLWSVLSKIS (97 aa)). The segment at 499–535 (FFVALNNELLDACCSCHLFEYQGFLCKHAILVLQSAD) adopts an SWIM-type zinc-finger fold. A coiled-coil region spans residues 660 to 680 (EDATNRSEELRQETEQVSSRA). Residues 788 to 798 (GSSQFQGSDSS) are compositionally biased toward polar residues. Residues 788–807 (GSSQFQGSDSSHPSDHRLSN) form a disordered region.

It belongs to the FHY3/FAR1 family. As to expression, expressed in hypocotyls, rosette and cauline leaves, inflorescences stems, flowers and siliques.

It localises to the nucleus. Putative transcription activator involved in regulating light control of development. The chain is Protein FAR1-RELATED SEQUENCE 2 (FRS2) from Arabidopsis thaliana (Mouse-ear cress).